A 238-amino-acid chain; its full sequence is Serine protease SplA (238 aa).

The N-terminal stretch at M1 to A38 is a signal peptide. Active-site charge relay system residues include H77, D116, and S192.

This sequence belongs to the peptidase S1B family.

Its subcellular location is the secreted. The protein is Serine protease SplA (splA) of Staphylococcus aureus (strain COL).